Consider the following 641-residue polypeptide: Chaperone protein HtpG (641 aa).

An a; substrate-binding region spans residues 1-351; it reads MTQSVHAETH…SNDLPLNVSR (351 aa). A b region spans residues 352–568; sequence EILQDNKVTV…AHGMSTQMIK (217 aa). The tract at residues 569–641 is c; sequence LMRAAGQPVP…SRINRLLLQA (73 aa).

This sequence belongs to the heat shock protein 90 family. In terms of assembly, homodimer.

It is found in the cytoplasm. Molecular chaperone. Has ATPase activity. This chain is Chaperone protein HtpG, found in Aeromonas hydrophila subsp. hydrophila (strain ATCC 7966 / DSM 30187 / BCRC 13018 / CCUG 14551 / JCM 1027 / KCTC 2358 / NCIMB 9240 / NCTC 8049).